We begin with the raw amino-acid sequence, 651 residues long: Bromodomain-containing protein 7 (651 aa).

Disordered regions lie at residues 36–133 (ELST…EVEQ) and 257–298 (KDKV…KKKD). A compositionally biased stretch (basic residues) spans 58–69 (HKDRKRKKRKKG). A Nuclear localization signal motif is present at residues 65–96 (KRKKGEKQVPGEEKEKRKRKVKEDKRKRDREH). The span at 70-105 (EKQVPGEEKEKRKRKVKEDKRKRDREHPDSEGEQEL) shows a compositional bias: basic and acidic residues. The Bromo domain maps to 131 to 235 (VEQTPLQEAL…HSGMKILSQE (105 aa)). The segment covering 271–298 (GSGKDKGEPVDGDTKAFKTPNKEHKKKD) has biased composition (basic and acidic residues). Residues 533 to 564 (SEEAEIFQRKLDETTKLLRELQDAQNERLSTK) are a coiled coil.

Its subcellular location is the nucleus. It is found in the chromosome. Functionally, acts both as coactivator and as corepressor. May play a role in chromatin remodeling. Participates in the Wnt signaling pathway. Transcriptional corepressor that down-regulates the expression of target genes. Binds to target promoters, leading to increased histone H3 acetylation. Coactivator for TP53-mediated activation of transcription of a set of target genes. Required for TP53-mediated cell-cycle arrest in response to oncogene activation. Inhibits cell cycle progression from G1 to S phase. The protein is Bromodomain-containing protein 7 (BRD7) of Gallus gallus (Chicken).